The following is a 368-amino-acid chain: CST complex subunit STN1 (368 aa).

Residues 1-185 (MQPGSSRCEE…KVYDQPFHSS (185 aa)) form an interaction with CTC1 region. Positions 57-155 (VDVLGTVIGV…EIHATTYYKV (99 aa)) form a DNA-binding region, OB. Winged helix-turn-helix (wHTH) stretches follow at residues 191–295 (EALS…YVTR) and 296–368 (EDKD…YTAF).

This sequence belongs to the STN1 family. In terms of assembly, component of the CST complex, composed of TEN1/C17orf106, CTC1/C17orf68 and STN1; in the complex interacts directly with TEN1 and CTC1. Interacts with ACD/TPP1, POT1 and POLA1.

The protein localises to the nucleus. It localises to the chromosome. It is found in the telomere. Component of the CST complex proposed to act as a specialized replication factor promoting DNA replication under conditions of replication stress or natural replication barriers such as the telomere duplex. The CST complex binds single-stranded DNA with high affinity in a sequence-independent manner, while isolated subunits bind DNA with low affinity by themselves. Initially the CST complex has been proposed to protect telomeres from DNA degradation. However, the CST complex has been shown to be involved in several aspects of telomere replication. The CST complex inhibits telomerase and is involved in telomere length homeostasis; it is proposed to bind to newly telomerase-synthesized 3' overhangs and to terminate telomerase action implicating the association with the ACD:POT1 complex thus interfering with its telomerase stimulation activity. The CST complex is also proposed to be involved in fill-in synthesis of the telomeric C-strand probably implicating recruitment and activation of DNA polymerase alpha. The CST complex facilitates recovery from many forms of exogenous DNA damage; seems to be involved in the re-initiation of DNA replication at repaired forks and/or dormant origins. Required for efficicient replication of the duplex region of the telomere. Promotes efficient replication of lagging-strand telomeres. Promotes general replication start following replication-fork stalling implicating new origin firing. May be in involved in C-strand fill-in during late S/G2 phase independent of its role in telomere duplex replication. Its function is as follows. Component of the CST complex, a complex that binds to single-stranded DNA and is required to protect telomeres from DNA degradation. The CST complex binds single-stranded DNA with high affinity in a sequence-independent manner, while isolated subunits bind DNA with low affinity by themselves. In addition to telomere protection, the CST complex has probably a more general role in DNA metabolism at non-telomeric sites. The polypeptide is CST complex subunit STN1 (Homo sapiens (Human)).